The sequence spans 37 residues: Large ribosomal subunit protein bL36 (37 aa).

The protein belongs to the bacterial ribosomal protein bL36 family.

In Mycoplasmopsis synoviae (strain 53) (Mycoplasma synoviae), this protein is Large ribosomal subunit protein bL36.